The following is a 152-amino-acid chain: Ribosome maturation factor RimP (152 aa).

Belongs to the RimP family.

It localises to the cytoplasm. In terms of biological role, required for maturation of 30S ribosomal subunits. The polypeptide is Ribosome maturation factor RimP (Clostridium beijerinckii (strain ATCC 51743 / NCIMB 8052) (Clostridium acetobutylicum)).